We begin with the raw amino-acid sequence, 554 residues long: Tetratricopeptide repeat protein 34 (554 aa).

TPR repeat units lie at residues 38–71 (ETSCLLAADALYRLGRLDDAHKSLLVALSQRPQA), 166–199 (SESLLVRARCYGLLGQKKTAMFDFNAILREEPGN), 200–233 (VKALCGRALVHLALDQLQEAVDDMVSALKLDPGT), 294–327 (PSWRLLLTDILTGLGKYQEAGTHLQEALHLTPSS), 328–361 (EAAQARQGLLQLKKGDVSAAVHGLQCLAERDTQD), 411–445 (NPYHLRLRVACLTQLQEYDRALRDLDRVLQHPAED), 452–485 (SEDFCTRGRLLLSLGDKDGAAGAFTQALALAPAQ), and 500–533 (ASVFLIHGQRCLEEEHFEEAWTAVQNGLLVDPSH).

The polypeptide is Tetratricopeptide repeat protein 34 (Ttc34) (Mus musculus (Mouse)).